We begin with the raw amino-acid sequence, 130 residues long: Small ribosomal subunit protein uS9 (130 aa).

The protein belongs to the universal ribosomal protein uS9 family.

This Thiobacillus denitrificans (strain ATCC 25259 / T1) protein is Small ribosomal subunit protein uS9.